Consider the following 340-residue polypeptide: MTLVGNFSPLVLVGDSDRVEAETVGAYLDGWAGHDKVRLATANAIKAILSGAGRLVGRIARGYLPGDPGKLVGVNSDQDQQKSIDVGSHNLFVELLIAAGVASILSEEADLPVAGKADGLVAVAIDPLDGSGNVGLGAPLGTIFSIFPADVEEPFLQPGNRQIAAGYVSYGNSVDLGFSVGEGVIFATLDPVSGQFHITRRNVKLPERTSDLAFNASVQRHLSAGMQAYVNDAFLGKDGPRGRNFNMRWLGAAVGDMHRIMQRGGLFFYVNDSRPGYEKGRLRLVYEANPIAFLAREAGSKATDGSRPILDIVPQTYHERSALVFGVAEEVDILGEYFVK.

Mg(2+)-binding residues include Glu107, Asp126, Leu128, and Asp129. Residue Asn215 participates in substrate binding. Glu287 is a Mg(2+) binding site.

It belongs to the FBPase class 1 family. As to quaternary structure, homotetramer. Mg(2+) is required as a cofactor.

The protein resides in the cytoplasm. The enzyme catalyses beta-D-fructose 1,6-bisphosphate + H2O = beta-D-fructose 6-phosphate + phosphate. It functions in the pathway carbohydrate biosynthesis; gluconeogenesis. The protein is Fructose-1,6-bisphosphatase class 1 of Brucella ovis (strain ATCC 25840 / 63/290 / NCTC 10512).